The chain runs to 265 residues: Homeobox protein engrailed-2-A (265 aa).

Composition is skewed to basic and acidic residues over residues M1–E12 and G102–K115. 3 disordered regions span residues M1–H38, L75–Q140, and D156–T181. Low complexity predominate over residues D122–S136. Positions D176–T235 form a DNA-binding region, homeobox.

Belongs to the engrailed homeobox family.

The protein resides in the nucleus. The chain is Homeobox protein engrailed-2-A (en2-a) from Xenopus laevis (African clawed frog).